The sequence spans 160 residues: Phosphopantetheine adenylyltransferase (160 aa).

Residue Thr10 coordinates substrate. Residues 10–11 (TF) and His18 contribute to the ATP site. Lys42, Met74, and Arg88 together coordinate substrate. ATP contacts are provided by residues 89–91 (GVR), Glu99, and 124–130 (WSYISST).

The protein belongs to the bacterial CoaD family. As to quaternary structure, homohexamer. Requires Mg(2+) as cofactor.

The protein resides in the cytoplasm. It carries out the reaction (R)-4'-phosphopantetheine + ATP + H(+) = 3'-dephospho-CoA + diphosphate. The protein operates within cofactor biosynthesis; coenzyme A biosynthesis; CoA from (R)-pantothenate: step 4/5. Reversibly transfers an adenylyl group from ATP to 4'-phosphopantetheine, yielding dephospho-CoA (dPCoA) and pyrophosphate. This chain is Phosphopantetheine adenylyltransferase, found in Sodalis glossinidius (strain morsitans).